A 165-amino-acid chain; its full sequence is Sorting nexin-12 (165 aa).

Residues methionine 1–threonine 20 form a disordered region. Serine 2 bears the N-acetylserine mark. Tyrosine 23 is modified (phosphotyrosine). Residues asparagine 28–aspartate 151 form the PX domain. Positions 71, 73, 96, and 118 each coordinate a 1,2-diacyl-sn-glycero-3-phospho-(1D-myo-inositol-3-phosphate). At serine 73 the chain carries Phosphoserine.

It belongs to the sorting nexin family.

It localises to the membrane. Its function is as follows. May be involved in several stages of intracellular trafficking. This chain is Sorting nexin-12 (Snx12), found in Mus musculus (Mouse).